A 149-amino-acid polypeptide reads, in one-letter code: Large ribosomal subunit protein bL9 (149 aa).

The protein belongs to the bacterial ribosomal protein bL9 family.

In terms of biological role, binds to the 23S rRNA. The chain is Large ribosomal subunit protein bL9 from Tolumonas auensis (strain DSM 9187 / NBRC 110442 / TA 4).